The primary structure comprises 151 residues: Ocs element-binding factor 1 (151 aa).

Over residues 1-17 the composition is skewed to polar residues; it reads MSSSSLSPTAGRTSGSD. The disordered stretch occupies residues 1-47; that stretch reads MSSSSLSPTAGRTSGSDGDSAADTHRREKRRLSNRESARRSRLRKQQ. Basic and acidic residues predominate over residues 22–39; it reads ADTHRREKRRLSNRESAR. The bZIP domain maps to 24 to 87; the sequence is THRREKRRLS…TRVEQENTVL (64 aa). Positions 26–45 are basic motif; the sequence is RREKRRLSNRESARRSRLRK. Residues 52–59 are leucine-zipper; it reads LVQEVARL.

It belongs to the bZIP family. In terms of tissue distribution, roots and shoots of young plants, and basal portion of leaves.

It localises to the nucleus. Its function is as follows. May contribute to developmentally specific patterns of gene expression. Binds specifically to ocs elements which are transcriptional enhancer found in the promoters of several plant genes. OCSBF-1 is able to bind to a site within each half of the ocs element as well as to animal AP-1 and CREB sites. This Zea mays (Maize) protein is Ocs element-binding factor 1 (OBF1).